Here is a 271-residue protein sequence, read N- to C-terminus: High mobility group protein homolog TDP-1 (271 aa).

One can recognise a DEK-C domain in the interval 8–63 (GPLPTDIEETVITIMREEGVRYITAKILRMRLESKYQMEFGPHKAAIDDIVARAMQ). The disordered stretch occupies residues 75-118 (LKEKDASKSSGGKGSKRARSAGAEAPSKTKKEMTEKPKKPADYP). Positions 101-116 (SKTKKEMTEKPKKPAD) are enriched in basic and acidic residues. 2 DNA-binding regions (HMG box) span residues 118–186 (PKPA…DEYK) and 206–270 (PKRA…AALP).

The protein localises to the nucleus. Functionally, unknown. May play a role in transcription and/or DNA replication. It is not known whether this protein is DNA sequence binding-specific or not. The polypeptide is High mobility group protein homolog TDP-1 (Trypanosoma brucei rhodesiense).